Consider the following 126-residue polypeptide: Aspartate 1-decarboxylase (126 aa).

Ser25 (schiff-base intermediate with substrate; via pyruvic acid) is an active-site residue. Ser25 carries the pyruvic acid (Ser) modification. Substrate is bound at residue Thr57. Tyr58 acts as the Proton donor in catalysis. Residue 73–75 (GAA) coordinates substrate.

This sequence belongs to the PanD family. Heterooctamer of four alpha and four beta subunits. The cofactor is pyruvate. Post-translationally, is synthesized initially as an inactive proenzyme, which is activated by self-cleavage at a specific serine bond to produce a beta-subunit with a hydroxyl group at its C-terminus and an alpha-subunit with a pyruvoyl group at its N-terminus.

The protein resides in the cytoplasm. It carries out the reaction L-aspartate + H(+) = beta-alanine + CO2. Its pathway is cofactor biosynthesis; (R)-pantothenate biosynthesis; beta-alanine from L-aspartate: step 1/1. Its function is as follows. Catalyzes the pyruvoyl-dependent decarboxylation of aspartate to produce beta-alanine. The protein is Aspartate 1-decarboxylase of Methylobacillus flagellatus (strain ATCC 51484 / DSM 6875 / VKM B-1610 / KT).